Here is a 615-residue protein sequence, read N- to C-terminus: Protein PSK SIMULATOR 2 (615 aa).

G2 carries N-myristoyl glycine lipidation. Residues K16 to R27 are compositionally biased toward basic and acidic residues. Disordered regions lie at residues K16 to K59 and A506 to Q529. Low complexity predominate over residues S42 to G52. The span at Q512–Q529 shows a compositional bias: polar residues.

Its subcellular location is the nucleus. In terms of biological role, promotes seedling growth probably via the regulation of phytosulfokine (PSK) signaling; PSK are peptide phytohormones acting as growth factors. Involved in PSK-induced root growth. Together with PSI1 and PSI3, required during vegetative growth and reproduction. The protein is Protein PSK SIMULATOR 2 of Arabidopsis thaliana (Mouse-ear cress).